The chain runs to 484 residues: GRIP domain-containing protein RUD3 (484 aa).

A compositionally biased stretch (basic residues) spans 1 to 15 (MGKNKKKTGKKAKSH). The interval 1 to 75 (MGKNKKKTGK…GVDKQKVNDG (75 aa)) is disordered. Positions 16-30 (PHVEDVDETVNKPEE) are enriched in basic and acidic residues. Ser55 and Ser64 each carry phosphoserine. Residues 61-72 (KDLSEGVDKQKV) are compositionally biased toward basic and acidic residues. Residues 84–383 (LEDKKAGDEM…LQIGKLRHEA (300 aa)) are a coiled coil. Residues 401 to 452 (SDSESVDKELISNLLISFVSIPRADPRKFEVLELLSNFLNWDEDKKQQAGLI) form the GRIP domain. Ser468 carries the phosphoserine modification.

Its subcellular location is the golgi apparatus lumen. Its function is as follows. Involved in the structural organization of the cis-Golgi and in vesicle targeting/fusion stages of ER to Golgi transport. In Saccharomyces cerevisiae (strain ATCC 204508 / S288c) (Baker's yeast), this protein is GRIP domain-containing protein RUD3 (RUD3).